The chain runs to 856 residues: DNA mismatch repair protein MutS (856 aa).

Position 607–614 (607–614 (GPNMAGKS)) interacts with ATP.

This sequence belongs to the DNA mismatch repair MutS family.

In terms of biological role, this protein is involved in the repair of mismatches in DNA. It is possible that it carries out the mismatch recognition step. This protein has a weak ATPase activity. This is DNA mismatch repair protein MutS from Cytophaga hutchinsonii (strain ATCC 33406 / DSM 1761 / CIP 103989 / NBRC 15051 / NCIMB 9469 / D465).